The sequence spans 246 residues: Eukaryotic translation initiation factor 6 (246 aa).

It belongs to the eIF-6 family. In terms of assembly, monomer. Associates with the 60S ribosomal subunit.

It localises to the cytoplasm. The protein localises to the nucleus. Its subcellular location is the nucleolus. Functionally, binds to the 60S ribosomal subunit and prevents its association with the 40S ribosomal subunit to form the 80S initiation complex in the cytoplasm. May also be involved in ribosome biogenesis. Involved in miRNA-mediated gene silencing. The chain is Eukaryotic translation initiation factor 6 from Caenorhabditis elegans.